We begin with the raw amino-acid sequence, 76 residues long: MVLEKIKTLMVNQLSLDSQSITLKTRFREDLGLDSLDALELMMELEKIFNVSISDTTLQNFKTVEDVVLYIEKNLA.

The Carrier domain maps to 1-75 (MVLEKIKTLM…DVVLYIEKNL (75 aa)). Residue S35 is modified to O-(pantetheine 4'-phosphoryl)serine.

The protein belongs to the acyl carrier protein (ACP) family. 4'-phosphopantetheine is transferred from CoA to a specific serine of apo-ACP by AcpS. This modification is essential for activity because fatty acids are bound in thioester linkage to the sulfhydryl of the prosthetic group.

The protein localises to the cytoplasm. The protein operates within lipid metabolism; fatty acid biosynthesis. Its function is as follows. Carrier of the growing fatty acid chain in fatty acid biosynthesis. This Phytoplasma australiense protein is Acyl carrier protein.